The primary structure comprises 368 residues: Peptide chain release factor 2 (368 aa).

N5-methylglutamine is present on Gln-251.

It belongs to the prokaryotic/mitochondrial release factor family. Methylated by PrmC. Methylation increases the termination efficiency of RF2.

The protein localises to the cytoplasm. Functionally, peptide chain release factor 2 directs the termination of translation in response to the peptide chain termination codons UGA and UAA. The protein is Peptide chain release factor 2 of Nitratiruptor sp. (strain SB155-2).